A 271-amino-acid chain; its full sequence is 1,4-dihydroxy-2-naphthoyl-CoA synthase (271 aa).

Residues Ser71–Gln75, Tyr83, Tyr115–Gly119, Thr141, Ser147, Tyr244, and Lys259 each bind substrate. Gln140 to Gly142 provides a ligand contact to hydrogencarbonate. A compositionally biased stretch (basic and acidic residues) spans Lys250 to Asp263. Residues Lys250–Pro271 form a disordered region.

The protein belongs to the enoyl-CoA hydratase/isomerase family. MenB subfamily. The cofactor is hydrogencarbonate.

The catalysed reaction is 2-succinylbenzoyl-CoA + H(+) = 1,4-dihydroxy-2-naphthoyl-CoA + H2O. It functions in the pathway quinol/quinone metabolism; 1,4-dihydroxy-2-naphthoate biosynthesis; 1,4-dihydroxy-2-naphthoate from chorismate: step 6/7. Its pathway is quinol/quinone metabolism; menaquinone biosynthesis. Its function is as follows. Converts o-succinylbenzoyl-CoA (OSB-CoA) to 1,4-dihydroxy-2-naphthoyl-CoA (DHNA-CoA). The chain is 1,4-dihydroxy-2-naphthoyl-CoA synthase from Bacillus subtilis (strain 168).